We begin with the raw amino-acid sequence, 521 residues long: Cytochrome P450 1A1 (521 aa).

Phe-229 provides a ligand contact to substrate. Residue Cys-463 coordinates heme.

The protein belongs to the cytochrome P450 family. Heme serves as cofactor.

The protein resides in the endoplasmic reticulum membrane. It localises to the microsome membrane. The enzyme catalyses an organic molecule + reduced [NADPH--hemoprotein reductase] + O2 = an alcohol + oxidized [NADPH--hemoprotein reductase] + H2O + H(+). In terms of biological role, cytochromes P450 are a group of heme-thiolate monooxygenases. They oxidize a variety of structurally unrelated compounds, including steroids, fatty acids, and xenobiotics. The polypeptide is Cytochrome P450 1A1 (cyp1a1) (Oryzias latipes (Japanese rice fish)).